Here is an 88-residue protein sequence, read N- to C-terminus: Acyl carrier protein (88 aa).

The Carrier domain occupies 4-79 (DSVPAKVMEI…AAVDYIQNKM (76 aa)). At Ser39 the chain carries O-(pantetheine 4'-phosphoryl)serine.

Belongs to the acyl carrier protein (ACP) family. In terms of processing, 4'-phosphopantetheine is transferred from CoA to a specific serine of apo-ACP by AcpS. This modification is essential for activity because fatty acids are bound in thioester linkage to the sulfhydryl of the prosthetic group.

It localises to the cytoplasm. The protein operates within lipid metabolism; fatty acid biosynthesis. Carrier of the growing fatty acid chain in fatty acid biosynthesis. The protein is Acyl carrier protein of Trichodesmium erythraeum (strain IMS101).